The primary structure comprises 589 residues: Putative phospholipase B-like 2 (589 aa).

A signal peptide spans 1-41 (MVAPMYGSPGGRLARAVTRALALALVLALLVGLFLSGLTGA). N-linked (GlcNAc...) asparagine glycans are attached at residues N88 and N110. A disulfide bridge connects residues C142 and C152. 4 N-linked (GlcNAc...) asparagine glycosylation sites follow: N174, N231, N436, and N465. Residues C492 and C495 are joined by a disulfide bond. N-linked (GlcNAc...) asparagine glycosylation is present at N515.

This sequence belongs to the phospholipase B-like family. As to quaternary structure, interacts with IGF2R. Post-translationally, glycosylated; contains mannose 6-phosphate sugars.

The protein resides in the lysosome lumen. Functionally, putative phospholipase. In Bos taurus (Bovine), this protein is Putative phospholipase B-like 2 (PLBD2).